The sequence spans 231 residues: uncharacterized protein (231 aa).

A helical membrane pass occupies residues 86-106 (LIILFVIGLIITIIGLLMYEP).

Its subcellular location is the membrane. This is an uncharacterized protein from Methanocaldococcus jannaschii (strain ATCC 43067 / DSM 2661 / JAL-1 / JCM 10045 / NBRC 100440) (Methanococcus jannaschii).